The following is a 1355-amino-acid chain: Phospholipid-transporting ATPase DRS2 (1355 aa).

A compositionally biased stretch (basic and acidic residues) spans 1–15; the sequence is MNDDRETPPKRKPGE. The interval 1 to 50 is disordered; it reads MNDDRETPPKRKPGEDDTLFDIDFLDDTTSHSGSRSKVTNSHANANYIPP. Residues 1–104 form an involved in autoinhibition region; that stretch reads MNDDRETPPK…SDAYQPQSLR (104 aa). At 1 to 221 the chain is on the cytoplasmic side; the sequence is MNDDRETPPK…TFLPKFLFQE (221 aa). A compositionally biased stretch (acidic residues) spans 16–26; that stretch reads DDTLFDIDFLD. A compositionally biased stretch (polar residues) spans 30 to 44; that stretch reads SHSGSRSKVTNSHAN. Ser102 is modified (phosphoserine). Residues 222–242 form a helical membrane-spanning segment; that stretch reads FSKYANLFFLCTSAIQQVPHV. The tract at residues 237-238 is involved in phosphatidylserine substrate recognition; sequence QQ. The Lumenal portion of the chain corresponds to 243–246; it reads SPTN. Residues 247 to 267 traverse the membrane as a helical segment; the sequence is RYTTIGTLLVVLIVSAMKECI. Residues 268–449 lie on the Cytoplasmic side of the membrane; it reads EDIKRANSDK…VEKIINRQII (182 aa). The chain crosses the membrane as a helical span at residues 450-470; that stretch reads ALFTVLIVLILISSIGNVIMS. At 471 to 490 the chain is on the lumenal side; it reads TADAKHLSYLYLEGTNKAGL. Residues 491 to 511 form a helical membrane-spanning segment; the sequence is FFKDFLTFWILFSNLVPISLF. Topologically, residues 512 to 1012 are cytoplasmic; sequence VTVELIKYYQ…WSYQRISVAI (501 aa). The active-site 4-aspartylphosphate intermediate is the Asp560. The ATP site is built by Asp560, Lys561, Thr562, Glu655, Phe698, Ser700, Lys703, Lys721, Arg755, Thr756, Thr835, Gly836, Asp837, Arg928, and Lys934. Asp560 provides a ligand contact to Mg(2+). Thr562 contributes to the Mg(2+) binding site. Asp954 lines the Mg(2+) pocket. Asn957 and Asp958 together coordinate ATP. Position 958 (Asp958) interacts with Mg(2+). A helical transmembrane segment spans residues 1013–1033; sequence LYSFYKNTALYMTQFWYVFAN. Residues 1034 to 1043 are Lumenal-facing; it reads AFSGQSIMES. The chain crosses the membrane as a helical span at residues 1044 to 1064; the sequence is WTMSFYNLFFTVWPPFVIGVF. The Cytoplasmic segment spans residues 1065–1094; it reads DQFVSSRLLERYPQLYKLGQKGQFFSVYIF. A helical membrane pass occupies residues 1095-1115; that stretch reads WGWIINGFFHSAIVFIGTILI. Residues 1116–1131 are Lumenal-facing; it reads YRYGFALNMHGELADH. Residues 1132-1152 traverse the membrane as a helical segment; it reads WSWGVTVYTTSVIIVLGKAAL. Lys1149 is a binding site for a 1,2-diacyl-sn-glycero-3-phospho-(1D-myo-inositol 4-phosphate). Residues 1153 to 1161 lie on the Cytoplasmic side of the membrane; it reads VTNQWTKFT. Residues 1162 to 1182 form a helical membrane-spanning segment; the sequence is LIAIPGSLLFWLIFFPIYASI. Residues 1183 to 1202 lie on the Lumenal side of the membrane; it reads FPHANISREYYGVVKHTYGS. Residues 1203–1223 form a helical membrane-spanning segment; it reads GVFWLTLIVLPIFALVRDFLW. A 1,2-diacyl-sn-glycero-3-phospho-(1D-myo-inositol 4-phosphate) contacts are provided by Arg1219, Trp1223, Lys1224, Tyr1235, and His1236. Residues 1224-1355 are Cytoplasmic-facing; it reads KYYKRMYEPE…SSRDDISFDI (132 aa). Residues 1230–1282 are interaction with GEA2; it reads YEPETYHVIQEMQKYNISDSRPHVQQFQNAIRKVRQVQRMKKQRGFAFSQAEE. Residues 1231–1309 form an involved in autoinhibition region; the sequence is EPETYHVIQE…KYGELQDASA (79 aa). The interval 1305–1355 is disordered; that stretch reads QDASANPFNDNNGLGSNDFESAEPFIENPFADGNQNSNRFSSSRDDISFDI. Over residues 1307-1323 the composition is skewed to polar residues; the sequence is ASANPFNDNNGLGSNDF. A compositionally biased stretch (basic and acidic residues) spans 1346–1355; it reads SSRDDISFDI.

The protein belongs to the cation transport ATPase (P-type) (TC 3.A.3) family. Type IV subfamily. As to quaternary structure, component of a flippase complex consisting of DRS2 and CDC50. Interacts with CDC50; the interaction is direct, is required for their mutual export from the endoplasmic reticulum, and preferentially occurs when DRS2 is in the E2P state. Interacts (via C-terminus) with GEA2 (via SEC7 domain); the interaction is direct. Interacts with GEA1. Mg(2+) serves as cofactor.

Its subcellular location is the golgi apparatus. The protein resides in the trans-Golgi network membrane. It is found in the endosome membrane. It catalyses the reaction ATP + H2O + phospholipidSide 1 = ADP + phosphate + phospholipidSide 2.. The catalysed reaction is a 1,2-diacyl-sn-glycero-3-phospho-L-serine(out) + ATP + H2O = a 1,2-diacyl-sn-glycero-3-phospho-L-serine(in) + ADP + phosphate + H(+). It carries out the reaction a 1,2-diacyl-sn-glycero-3-phosphoethanolamine(out) + ATP + H2O = a 1,2-diacyl-sn-glycero-3-phosphoethanolamine(in) + ADP + phosphate + H(+). Its activity is regulated as follows. Allosterically activated by binding 1,2-diacyl-sn-glycero-3-phospho-(1D-myo-inositol 4-phosphate) (phosphatidylinositol 4-phosphate). Inhibited by orthovanadate, N-ethylmaleimide, trifluoroberyllate and tetrafluoroaluminate; orthovanadate and N-ethylmaleimide inhibit phosphorylation of the active site aspartic acid. The ATPase activity is not potently stimulated by phosphatidylinositol 3-phosphate and phosphatidylinositol 5-phosphate, phosphatidylinositol 4,5-bisphosphate or phosphatidylcholine. Not inhibited by azide. Catalytic component of a P4-ATPase flippase complex which catalyzes the hydrolysis of ATP coupled to the transport of phosphatidylserine and small amounts of ethanolamine from the lumen to the cytosolic leaflet of the trans-Golgi network and ensures the maintenance of asymmetric distribution of phospholipids. Contributes to clathrin-coated vesicle formation, endocytosis, and protein trafficking between the Golgi and endosomal system. Does not appear to transport phosphatidylcholine or sphingomyelin. This Saccharomyces cerevisiae (strain ATCC 204508 / S288c) (Baker's yeast) protein is Phospholipid-transporting ATPase DRS2.